A 628-amino-acid chain; its full sequence is MSRFWHFKKFYFTSCYSMQRMRGKIFKNEPLVPMNVTSEHEQVQSISKEESRSLSSNDLNLSADSELQLESEPEIESEQLKNHEDVYEIIRSMVLAADTTLPRLSNNSLTGIYNHWKLNPNDDLPLYNPTKYTPYEFHSQYNQDRSYIITPRLSVTKLLVSSWCELRSFYQVYSGSVRLPSTKAMTQGTKLHSKLEAEVHPEIDTTEIEQFLISNAMSLRELQTTVPAEEETVVIDLGEVEQLAVDWAEMLIERLFSLIMGAEAREILLHGYLNLKNRSFVTNKDEIRESSSVLVSGIVDYIKLQNVTNPSDGTLFDDIHGFVDSAFDQVDNVPLVDLSQFLPEAKQILQNYDFRLTFTDVKTRSARQIPRQESVLEAAKFQTFYYRHFFHLLSRDSRFTYFSLIENAERRGHDVDKPLSILTTISLLRKHYHIFFKDFVKLANGEPIGFSPFDDSAKSIPYDFVSMFQSSDEFSLANPNHNHFLEQISAIDGIEYDSILSPLLKVWKTPPTLRYLAARASQLFNVFNENIGDITSVEYRYNKTSELLSEKVYDYNFSEFQAEVESASKFWNGEREVIPTEDLSRCSYCEFQSKCMVAGGKTTEAVEKKTIGPKIRQFLNECESSSKG.

Residues 1–21 constitute a mitochondrion transit peptide; the sequence is MSRFWHFKKFYFTSCYSMQRM. The segment at 37–58 is disordered; the sequence is TSEHEQVQSISKEESRSLSSND. Residues 38–52 are compositionally biased toward basic and acidic residues; sequence SEHEQVQSISKEESR. Positions 164, 586, 589, and 595 each coordinate [4Fe-4S] cluster.

This sequence belongs to the EXO5 family. Monomer. Mg(2+) is required as a cofactor. [4Fe-4S] cluster serves as cofactor.

It localises to the mitochondrion. In terms of biological role, single strand DNA specific 5' exonuclease involved in mitochondrial DNA replication and recombination. Releases dinucleotides as main products of catalysis. Has the capacity to slide across 5'double-stranded DNA or 5'RNA sequences and resumes cutting two nucleotides downstream of the double-stranded-to-single-stranded junction or RNA-to-DNA junction, respectively. In Candida albicans (strain SC5314 / ATCC MYA-2876) (Yeast), this protein is Exonuclease V, mitochondrial (DEM1).